We begin with the raw amino-acid sequence, 174 residues long: Larval cuticle protein LCP-22 (174 aa).

A signal peptide spans 1–16; sequence MKFAVVFACMVAAVAA. The 72-residue stretch at 82-153 folds into the Chitin-binding type R&amp;R domain; that stretch reads DGSYTYFYET…PTGNAIPTSP (72 aa).

Its function is as follows. Component of the cuticle of the larva of Bombyx mori. The sequence is that of Larval cuticle protein LCP-22 (LCP22) from Bombyx mori (Silk moth).